Reading from the N-terminus, the 92-residue chain is Acyl-CoA-binding protein (92 aa).

One can recognise an ACB domain in the interval 3 to 88 (LKEDFEEHAE…VKQLLEAEAS (86 aa)). An acyl-CoA is bound by residues 30-34 (YGLYK), lysine 56, and tyrosine 75.

The protein belongs to the ACBP family.

Its function is as follows. Binds medium- and long-chain acyl-CoA esters with very high affinity and may function as an intracellular carrier of acyl-CoA esters. This Brassica napus (Rape) protein is Acyl-CoA-binding protein.